Here is a 342-residue protein sequence, read N- to C-terminus: Ferredoxin--NADP reductase (342 aa).

Residues C17, D36, Q44, Y49, I89, F124, D289, and T330 each contribute to the FAD site.

Belongs to the ferredoxin--NADP reductase type 2 family. As to quaternary structure, homodimer. FAD serves as cofactor.

It carries out the reaction 2 reduced [2Fe-2S]-[ferredoxin] + NADP(+) + H(+) = 2 oxidized [2Fe-2S]-[ferredoxin] + NADPH. In Rhodopseudomonas palustris (strain HaA2), this protein is Ferredoxin--NADP reductase.